The chain runs to 972 residues: Leucine--tRNA ligase (972 aa).

The 'HIGH' region motif lies at 78-89 (PYPSGDGLHVGH). A 'KMSKS' region motif is present at residues 741–745 (KIGKS). Lys744 serves as a coordination point for ATP.

It belongs to the class-I aminoacyl-tRNA synthetase family.

The protein localises to the cytoplasm. The catalysed reaction is tRNA(Leu) + L-leucine + ATP = L-leucyl-tRNA(Leu) + AMP + diphosphate. In Mycobacterium leprae (strain Br4923), this protein is Leucine--tRNA ligase.